Here is a 338-residue protein sequence, read N- to C-terminus: Ketol-acid reductoisomerase (NADP(+)) (338 aa).

The 181-residue stretch at methionine 1–threonine 181 folds into the KARI N-terminal Rossmann domain. NADP(+) is bound by residues tyrosine 24–glutamine 27, arginine 47, and serine 52. Residue histidine 107 is part of the active site. Glycine 133 is an NADP(+) binding site. The KARI C-terminal knotted domain maps to asparagine 182–isoleucine 327. 4 residues coordinate Mg(2+): aspartate 190, glutamate 194, glutamate 226, and glutamate 230. Serine 251 lines the substrate pocket.

The protein belongs to the ketol-acid reductoisomerase family. Mg(2+) is required as a cofactor.

It catalyses the reaction (2R)-2,3-dihydroxy-3-methylbutanoate + NADP(+) = (2S)-2-acetolactate + NADPH + H(+). It carries out the reaction (2R,3R)-2,3-dihydroxy-3-methylpentanoate + NADP(+) = (S)-2-ethyl-2-hydroxy-3-oxobutanoate + NADPH + H(+). Its pathway is amino-acid biosynthesis; L-isoleucine biosynthesis; L-isoleucine from 2-oxobutanoate: step 2/4. The protein operates within amino-acid biosynthesis; L-valine biosynthesis; L-valine from pyruvate: step 2/4. Involved in the biosynthesis of branched-chain amino acids (BCAA). Catalyzes an alkyl-migration followed by a ketol-acid reduction of (S)-2-acetolactate (S2AL) to yield (R)-2,3-dihydroxy-isovalerate. In the isomerase reaction, S2AL is rearranged via a Mg-dependent methyl migration to produce 3-hydroxy-3-methyl-2-ketobutyrate (HMKB). In the reductase reaction, this 2-ketoacid undergoes a metal-dependent reduction by NADPH to yield (R)-2,3-dihydroxy-isovalerate. The chain is Ketol-acid reductoisomerase (NADP(+)) from Cupriavidus necator (strain ATCC 17699 / DSM 428 / KCTC 22496 / NCIMB 10442 / H16 / Stanier 337) (Ralstonia eutropha).